Consider the following 271-residue polypeptide: MSSHADSKPWTVPALAQAKRDGRKLVMLTAYDAGFARTFDANGVDLILVGDSLGMVVQGHESTLPVTTADMVYHTAAVARVLERALLVADLSFQADATPERALDAATQLLQAGAEMVKIEGAGHKLDVIRYLVEREIPVCSHLGLTPQSVLRFGGYKVQGRGEAGEQLRRDAQAAVDAGVSLIVLECVPTPIAAQISAELRVPTIGIGAGPGCDGQVLVMHDMLGLDSGHRRPKFVKDFLAEGGSVAGAVQAYAQAVRDGSFPDAEHAYAA.

Residues Asp-51 and Asp-90 each coordinate Mg(2+). Residues 51-52, Asp-90, and Lys-118 each bind 3-methyl-2-oxobutanoate; that span reads DS. Glu-120 lines the Mg(2+) pocket. The Proton acceptor role is filled by Glu-186.

Belongs to the PanB family. As to quaternary structure, homodecamer; pentamer of dimers. It depends on Mg(2+) as a cofactor.

Its subcellular location is the cytoplasm. It carries out the reaction 3-methyl-2-oxobutanoate + (6R)-5,10-methylene-5,6,7,8-tetrahydrofolate + H2O = 2-dehydropantoate + (6S)-5,6,7,8-tetrahydrofolate. It functions in the pathway cofactor biosynthesis; (R)-pantothenate biosynthesis; (R)-pantoate from 3-methyl-2-oxobutanoate: step 1/2. Its function is as follows. Catalyzes the reversible reaction in which hydroxymethyl group from 5,10-methylenetetrahydrofolate is transferred onto alpha-ketoisovalerate to form ketopantoate. The polypeptide is 3-methyl-2-oxobutanoate hydroxymethyltransferase (Xanthomonas campestris pv. campestris (strain B100)).